A 624-amino-acid polypeptide reads, in one-letter code: MAAHRWAVWAVLLLRLLVPAARVLANMEGDALHSLRTNLVDPNNVLQSWDPTLVNPCTWFHVTCNNDNSVIRVDLGNAALSGTLVPQLGQLKNLQYLELYSNNISGTIPSELGNLTNLVSLDLYLNNFTGPIPDSLGNLLKLRFLRLNNNSLSGSIPKSLTAITALQVLDLSNNNLSGEVPSTGSFSLFTPISFANNPSLCGPGTTKPCPGAPPFSPPPPYNPPTPVQSPGSSSSTGAIAGGVAAGAALLFAIPAIGFAWYRRRKPQEHFFDVPAEEDPEVHLGQLKRFSLRELQVATDTFSNKNILGRGGFGKVYKGRLADGSLVAVKRLKEERTPGGELQFQTEVEMISMAVHRNLLRLRGFCMTPTERLLVYPYMANGSVASRLRERPPSEPPLDWRTRRRIALGSARGLSYLHDHCDPKIIHRDVKAANILLDEDFEAVVGDFGLAKLMDYKDTHVTTAVRGTIGHIAPEYLSTGKSSEKTDVFGYGIMLLELITGQRAFDLARLANDDDVMLLDWVKGLLKEKRLEMLVDPDLQSNYIDVEVESLIQVALLCTQGSPTERPKMAEVVRMLEGDGLAERWEEWQKIEVVRQEVELGPHRNSEWIVDSTDNLHAVELSGPR.

Positions Met1 to Ala25 are cleaved as a signal peptide. Residues Asn26 to Gly237 are Extracellular-facing. LRR repeat units follow at residues Leu91–Leu115, Asn117–Leu139, Leu140–Ile163, and Thr164–Leu188. N-linked (GlcNAc...) asparagine glycans are attached at residues Asn103, Asn114, Asn127, Asn149, and Asn175. A disordered region spans residues Thr205–Thr236. Residues Pro210–Val227 show a composition bias toward pro residues. Residues Ala238 to Phe258 form a helical membrane-spanning segment. The Cytoplasmic portion of the chain corresponds to Ala259–Arg624. In terms of domain architecture, Protein kinase spans Phe301–Gln588. Residues Leu307–Val315 and Lys329 each bind ATP. The active-site Proton acceptor is the Asp428.

It belongs to the protein kinase superfamily. Ser/Thr protein kinase family. As to quaternary structure, forms homodimers. Interacts with BRI1. Interacts with REM4.1. In terms of tissue distribution, expressed in developing lateral roots, shoot apex, leaf blades, lamina joints and flowers. Expressed at low levels in leaf sheaths and panicles.

It localises to the cell membrane. It catalyses the reaction L-seryl-[protein] + ATP = O-phospho-L-seryl-[protein] + ADP + H(+). The enzyme catalyses L-threonyl-[protein] + ATP = O-phospho-L-threonyl-[protein] + ADP + H(+). Its function is as follows. LRR receptor kinase involved in defense response. Does not seem to be required specifically for XA21-mediated immunity or basal resistance to Xanthomonas oryzae pv. oryzae (Xoo), or immunity to Magnaporthe oryzae. Involved in brassinosteroid (BR) signaling pathway. Acts as a coreceptor of BRI1. Forms at the plasma membrane a receptor complex with BRI1 which is activated in response to brassinolide. Phosphorylates BRI1. Required for normal plant growth and leaf development. Possesses kinase activity in vitro. This chain is LRR receptor kinase BAK1, found in Oryza sativa subsp. japonica (Rice).